Consider the following 289-residue polypeptide: GTPase Era (289 aa).

Positions 2-167 (KSGFISLIGR…LDEIYKYLPE (166 aa)) constitute an Era-type G domain. The tract at residues 10–17 (GRTNAGKS) is G1. Position 10–17 (10–17 (GRTNAGKS)) interacts with GTP. A G2 region spans residues 36–40 (NATRR). The G3 stretch occupies residues 57 to 60 (DTPG). GTP is bound by residues 57–61 (DTPGL) and 116–119 (TKID). The G4 stretch occupies residues 116 to 119 (TKID). The G5 stretch occupies residues 146 to 148 (LSV). In terms of domain architecture, KH type-2 spans 198–274 (VSDEVPYSTD…FLKINVKIDK (77 aa)).

This sequence belongs to the TRAFAC class TrmE-Era-EngA-EngB-Septin-like GTPase superfamily. Era GTPase family. Monomer.

The protein localises to the cytoplasm. Its subcellular location is the cell inner membrane. In terms of biological role, an essential GTPase that binds both GDP and GTP, with rapid nucleotide exchange. Plays a role in 16S rRNA processing and 30S ribosomal subunit biogenesis and possibly also in cell cycle regulation and energy metabolism. The chain is GTPase Era from Campylobacter fetus subsp. fetus (strain 82-40).